A 348-amino-acid polypeptide reads, in one-letter code: Dehydrogenase orsE (348 aa).

NADP(+) is bound at residue 43-46; that stretch reads LDTH. 130–137 contacts substrate; sequence FAVEAAVC. Residues 180–183, 203–206, and 272–273 each bind NADP(+); these read SSSV, GAHN, and VH. Substrate is bound at residue 292–296; it reads NDIAT. 339-340 contributes to the NADP(+) binding site; sequence VS.

The protein belongs to the zinc-containing alcohol dehydrogenase family. In terms of assembly, monomer.

Functionally, dehydrogenase; part of the gene cluster that mediates the biosynthesis of orsellinic acid, as well as of the cathepsin K inhibitors F9775 A and F9775 B. The non-reducing polyketide synthase orsA produces orsellinic acid by condensing acetyl-CoA with 3 malonyl-CoA units. Further modifications by the decarboxylase orsB and the tyrosinase-like protein orsC lead to the production of F9775 A and F9775 B. The functions of orsD and orsE remain unclear since only orsB and orsC are required to convert orsellinic acid into F9775 A and F9775 B. The polypeptide is Dehydrogenase orsE (Emericella nidulans (strain FGSC A4 / ATCC 38163 / CBS 112.46 / NRRL 194 / M139) (Aspergillus nidulans)).